Consider the following 757-residue polypeptide: Large ribosomal subunit protein mL102 (rPPR5) (757 aa).

The span at 39–55 (EETQTPANANPETQSPD) shows a compositional bias: polar residues. Residues 39 to 82 (EETQTPANANPETQSPDAKSETKKNLTSTETRPLRERFQRGKRQ) are disordered. Residues 70 to 82 (RPLRERFQRGKRQ) show a composition bias toward basic and acidic residues. 16 PPR repeats span residues 149–183 (DRDTHMKMIKMLGEVSKLNHARCILLDMPEKGVPW), 184–218 (DEDMFVVLIESYGKAGIVQESVKIFQKMKDLGVER), 219–253 (TIKSYNSLFKVILRRGRYMMAKRYFNKMVSEGVEP), 254–288 (TRHTYNLMLWGFFLSLRLETALRFFEDMKTRGISP), 289–323 (DDATFNTMINGFCRFKKMDEAEKLFVEMKGNKIGP), 324–358 (SVVSYTTMIKGYLAVDRVDDGLRIFEEMRSSGIEP), 359–393 (NATTYSTLLPGLCDAGKMVEAKNILKNMMAKHIAP), 395–429 (DNSIFLKLLVSQSKAGDMAAATEVLKAMATLNVPA), 430–464 (EAGHYGVLIENQCKASAYNRAIKLLDTLIEKEIIL), 473–507 (EPSAYNPIIEYLCNNGQTAKAEVLFRQLMKRGVQD), 510–541 (ALNNLIRGHAKEGNPDSSYEILKIMSRRGVPR), 542–576 (ESNAYELLIKSYMSKGEPGDAKTALDSMVEDGHVP), 577–611 (DSSLFRSVIESLFEDGRVQTASRVMMIMIDKNVGI), 614–648 (NMDLIAKILEALLMRGHVEEALGRIDLLNQNGHTA), 651–680 (DSLLSVLSEKGKTIAALKLLDFGLERDLSL), and 681–715 (EFSSYDKVLDALLGAGKTLNAYSVLCKIMEKGSST).

This sequence belongs to the PPR family. P subfamily. As to quaternary structure, component of the mitochondrial ribosome large subunit.

The protein localises to the mitochondrion. The chain is Large ribosomal subunit protein mL102 (rPPR5) from Arabidopsis thaliana (Mouse-ear cress).